The following is a 166-amino-acid chain: Putative signal peptidase complex catalytic subunit SEC11B (166 aa).

Residues Met1–Leu6 are Cytoplasmic-facing. The helical; Signal-anchor for type II membrane protein transmembrane segment at Tyr7 to Trp24 threads the bilayer. The Extracellular portion of the chain corresponds to Lys25–Glu166. Ser43 is an active-site residue.

It belongs to the peptidase S26B family.

It localises to the membrane. It catalyses the reaction Cleavage of hydrophobic, N-terminal signal or leader sequences from secreted and periplasmic proteins.. In terms of biological role, putative component of some signal peptidase complex which removes signal peptides from nascent proteins as they are translocated into the lumen of the endoplasmic reticulum. This Homo sapiens (Human) protein is Putative signal peptidase complex catalytic subunit SEC11B (SEC11B).